The following is a 186-amino-acid chain: Casparian strip membrane protein 3 (186 aa).

Residues 1–26 are Cytoplasmic-facing; it reads MTKSTYVELGEEKTSNQKGNMKRGVS. The helical transmembrane segment at 27–47 threads the bilayer; sequence ILDFILRLIAIVATLASAIAM. Residues 48–74 lie on the Extracellular side of the membrane; the sequence is GTTDESLPFFTQFVRFRANYDDLPTLR. A helical membrane pass occupies residues 75 to 95; sequence FFVVASAIVSGYLILSLPLSI. At 96–107 the chain is on the cytoplasmic side; sequence LHIIRSSAGMTR. Residues 108–128 form a helical membrane-spanning segment; that stretch reads VIFIILDTVMLGLLTAGSSAA. Residues 129-161 lie on the Extracellular side of the membrane; it reads ASIVYLAHKGNRKANWFAFCQQYNSFCERISGS. Residues 162–182 traverse the membrane as a helical segment; that stretch reads LIGSFIAIPLFIMLILLSALV. At 183 to 186 the chain is on the cytoplasmic side; it reads LSRR.

Belongs to the Casparian strip membrane proteins (CASP) family. Homodimer and heterodimers.

The protein resides in the cell membrane. Functionally, regulates membrane-cell wall junctions and localized cell wall deposition. Required for establishment of the Casparian strip membrane domain (CSD) and the subsequent formation of Casparian strips, a cell wall modification of the root endodermis that determines an apoplastic barrier between the intraorganismal apoplasm and the extraorganismal apoplasm and prevents lateral diffusion. This is Casparian strip membrane protein 3 from Medicago truncatula (Barrel medic).